A 426-amino-acid polypeptide reads, in one-letter code: Flotillin-1 (426 aa).

It belongs to the band 7/mec-2 family. Flotillin subfamily. As to quaternary structure, heterooligomeric complex of flotillins 1 and 2 and caveolins 1 and 2. As to expression, expressed in brain and ventral nerve cord from stage 12-16 of embryogenesis.

Its subcellular location is the cell membrane. The protein resides in the membrane. It localises to the caveola. May act as a scaffolding protein within caveolar membranes, functionally participating in formation of caveolae or caveolae-like vesicles. The chain is Flotillin-1 from Drosophila melanogaster (Fruit fly).